Here is a 557-residue protein sequence, read N- to C-terminus: 2-succinyl-5-enolpyruvyl-6-hydroxy-3-cyclohexene-1-carboxylate synthase (557 aa).

This sequence belongs to the TPP enzyme family. MenD subfamily. Homodimer. Mg(2+) is required as a cofactor. It depends on Mn(2+) as a cofactor. The cofactor is thiamine diphosphate.

The enzyme catalyses isochorismate + 2-oxoglutarate + H(+) = 5-enolpyruvoyl-6-hydroxy-2-succinyl-cyclohex-3-ene-1-carboxylate + CO2. It participates in quinol/quinone metabolism; 1,4-dihydroxy-2-naphthoate biosynthesis; 1,4-dihydroxy-2-naphthoate from chorismate: step 2/7. Its pathway is quinol/quinone metabolism; menaquinone biosynthesis. Functionally, catalyzes the thiamine diphosphate-dependent decarboxylation of 2-oxoglutarate and the subsequent addition of the resulting succinic semialdehyde-thiamine pyrophosphate anion to isochorismate to yield 2-succinyl-5-enolpyruvyl-6-hydroxy-3-cyclohexene-1-carboxylate (SEPHCHC). The sequence is that of 2-succinyl-5-enolpyruvyl-6-hydroxy-3-cyclohexene-1-carboxylate synthase from Yersinia enterocolitica serotype O:8 / biotype 1B (strain NCTC 13174 / 8081).